Here is a 153-residue protein sequence, read N- to C-terminus: Ribosome maturation factor RimP (153 aa).

It belongs to the RimP family.

The protein resides in the cytoplasm. Its function is as follows. Required for maturation of 30S ribosomal subunits. The polypeptide is Ribosome maturation factor RimP (Rippkaea orientalis (strain PCC 8801 / RF-1) (Cyanothece sp. (strain PCC 8801))).